A 686-amino-acid chain; its full sequence is U3 small nucleolar RNA-associated protein 4 homolog (686 aa).

WD repeat units lie at residues 7–50, 51–92, 93–135, 136–181, 182–226, 227–275, 276–317, 318–377, 378–427, 428–475, 476–516, 517–566, 567–627, and 628–666; these read HRVR…ANYF, QEKF…QALN, IKYA…PDKI, QFER…AVHK, MIVD…SATG, TLVK…SSEK, QWVR…LMEK, VEVK…PLSK, NADH…NISL, KRVS…KHLH, AFQP…VKQL, KLHC…WSRT, VQKQ…FPPT, and NESD…AVER. Lys321 participates in a covalent cross-link: Glycyl lysine isopeptide (Lys-Gly) (interchain with G-Cter in SUMO2).

Interacts with HIVEP1 Interacts with NOL11. Part of the small subunit (SSU) processome, composed of more than 70 proteins and the RNA chaperone small nucleolar RNA (snoRNA) U3. May be a component of the proposed t-UTP subcomplex of the ribosomal small subunit (SSU) processome containing at least UTP4, WDR43, HEATR1, UTP15, WDR75. May be phosphorylated during mitosis; may control the association of this protein with WRD43 and UTP15.

The protein localises to the nucleus. It localises to the nucleolus. It is found in the chromosome. In terms of biological role, ribosome biogenesis factor. Involved in nucleolar processing of pre-18S ribosomal RNA. Part of the small subunit (SSU) processome, first precursor of the small eukaryotic ribosomal subunit. During the assembly of the SSU processome in the nucleolus, many ribosome biogenesis factors, an RNA chaperone and ribosomal proteins associate with the nascent pre-rRNA and work in concert to generate RNA folding, modifications, rearrangements and cleavage as well as targeted d Involved in SSU pre-rRNA processing at sites A', A0, 1 and 2b. Required for optimal pre-ribosomal RNA transcription by RNA polymerase. May be a transcriptional regulator. Functionally, (Microbial infection) Acts as a positive regulator of HIVEP1 which specifically binds to the DNA sequence 5'-GGGACTTTCC-3' found in enhancer elements of numerous viral promoters such as those of HIV-1, SV40, or CMV. The protein is U3 small nucleolar RNA-associated protein 4 homolog of Homo sapiens (Human).